The chain runs to 111 residues: DNA-directed RNA polymerase subunit Rpo11 (111 aa).

Belongs to the archaeal Rpo11/eukaryotic RPB11/RPC19 RNA polymerase subunit family. Part of the RNA polymerase complex.

The protein resides in the cytoplasm. The catalysed reaction is RNA(n) + a ribonucleoside 5'-triphosphate = RNA(n+1) + diphosphate. In terms of biological role, DNA-dependent RNA polymerase (RNAP) catalyzes the transcription of DNA into RNA using the four ribonucleoside triphosphates as substrates. In Thermoplasma volcanium (strain ATCC 51530 / DSM 4299 / JCM 9571 / NBRC 15438 / GSS1), this protein is DNA-directed RNA polymerase subunit Rpo11.